The sequence spans 585 residues: Folylpolyglutamate synthase, mitochondrial (585 aa).

Residues 1–39 constitute a mitochondrion transit peptide; the sequence is MSRARCHALFLAAVSPRGATTRVAVRRGLSAWPVLQEPD. 103–106 serves as a coordination point for ATP; that stretch reads GKGS. Residues S127, E198, and H226 each coordinate Mg(2+). Residues R361 and D375 each coordinate ATP. Residues 477–497 are disordered; sequence EEQVSPDPWSTPGQEQDGPAS. Position 537 is a phosphoserine (S537).

This sequence belongs to the folylpolyglutamate synthase family. As to quaternary structure, monomer. The cofactor is a monovalent cation.

The protein resides in the mitochondrion inner membrane. Its subcellular location is the mitochondrion matrix. It is found in the cytoplasm. The catalysed reaction is (6S)-5,6,7,8-tetrahydrofolyl-(gamma-L-Glu)(n) + L-glutamate + ATP = (6S)-5,6,7,8-tetrahydrofolyl-(gamma-L-Glu)(n+1) + ADP + phosphate + H(+). Its pathway is cofactor biosynthesis; tetrahydrofolylpolyglutamate biosynthesis. In terms of biological role, catalyzes conversion of folates to polyglutamate derivatives allowing concentration of folate compounds in the cell and the intracellular retention of these cofactors, which are important substrates for most of the folate-dependent enzymes that are involved in one-carbon transfer reactions involved in purine, pyrimidine and amino acid synthesis. The sequence is that of Folylpolyglutamate synthase, mitochondrial (FPGS) from Bos taurus (Bovine).